A 69-amino-acid polypeptide reads, in one-letter code: Beta-defensin 114 (69 aa).

Positions 1–26 are cleaved as a signal peptide; the sequence is MRIFYYLHFLCYVTFILPATCTLVNA. Intrachain disulfides connect cysteine 29–cysteine 57, cysteine 36–cysteine 50, and cysteine 40–cysteine 58.

It belongs to the beta-defensin family. As to expression, expressed in epididymis, predominantly in the caput (at protein level).

It localises to the secreted. Has a salt-sensitive antimicrobial activity against Gram-negative bacteria, including E.coli, Gram-positive, including S.aureus, and fungi, including C.albicans. Binds to and neutralizes bacterial lipopolysaccharides (LPS), abolishing TNF production by macrophages challenged with LPS. Rescues the LPS-induced reduction of sperm motility in vitro and may protect from LPS-induced lethality. The chain is Beta-defensin 114 (DEFB114) from Homo sapiens (Human).